Here is a 496-residue protein sequence, read N- to C-terminus: Aspartic proteinase (496 aa).

The signal sequence occupies residues 1–24 (MAKRHLLLVTTCLWALSCALLLHA). Positions 25-59 (SSDGFLRVNLNKKRLDKEDLTAAKLAQQGNRLLKT) are cleaved as a propeptide — activation peptide. The region spanning 77 to 493 (YYGVIGLGSP…DFGKDRIGFA (417 aa)) is the Peptidase A1 domain. Asp-95 is an active-site residue. 2 disulfide bridges follow: Cys-108–Cys-114 and Cys-273–Cys-277. The active site involves Asp-282. The region spanning 307–407 (IISTECKEVV…NQLCERLPSP (101 aa)) is the Saposin B-type domain. Disulfide bonds link Cys-312–Cys-401, Cys-337–Cys-373, Cys-343–Cys-370, and Cys-415–Cys-452. An N-linked (GlcNAc...) asparagine glycan is attached at Asn-387.

The protein belongs to the peptidase A1 family.

The protein localises to the vacuole. Involved in the breakdown of propeptides of storage proteins in protein-storage vacuoles. In Oryza sativa subsp. japonica (Rice), this protein is Aspartic proteinase (RAP).